Reading from the N-terminus, the 459-residue chain is 11S globulin seed storage protein 2 (459 aa).

The first 21 residues, 1 to 21 (MVAFKFLLALSLSLLVSAAIA), serve as a signal peptide directing secretion. 2 disulfides stabilise this stretch: cysteine 34–cysteine 67 and cysteine 110–cysteine 284. Cupin type-1 domains are found at residues 37 to 237 (QRIS…ETIR) and 290 to 439 (TNVE…NQAQ). The interval 118-139 (RSQRTMERTEASEQQDRGSVRD) is disordered. A compositionally biased stretch (basic and acidic residues) spans 121-139 (RTMERTEASEQQDRGSVRD).

It belongs to the 11S seed storage protein (globulins) family. In terms of assembly, homohexamer. Each subunit is composed of an acidic and a basic chain derived from a single precursor and linked by a disulfide bond. In terms of tissue distribution, expressed in seeds (at protein level). Expressed in seeds.

Functionally, seed storage protein. This is 11S globulin seed storage protein 2 from Sesamum indicum (Oriental sesame).